Reading from the N-terminus, the 1183-residue chain is Chromosome partition protein Smc (1183 aa).

Proline 32–asparagine 39 contributes to the ATP binding site. A coiled-coil region spans residues glutamate 162–glutamate 483. One can recognise an SMC hinge domain in the interval serine 519 to isoleucine 632. Positions isoleucine 666–glutamate 1019 form a coiled coil.

Belongs to the SMC family. As to quaternary structure, homodimer.

It is found in the cytoplasm. In terms of biological role, required for chromosome condensation and partitioning. The polypeptide is Chromosome partition protein Smc (Fusobacterium nucleatum subsp. nucleatum (strain ATCC 25586 / DSM 15643 / BCRC 10681 / CIP 101130 / JCM 8532 / KCTC 2640 / LMG 13131 / VPI 4355)).